Consider the following 565-residue polypeptide: Sodium/hydrogen exchanger 9B1 (565 aa).

2 stretches are compositionally biased toward basic and acidic residues: residues 1 to 14 (MSEH…KDDG) and 23 to 86 (MSKD…ETQT). Positions 1-112 (MSEHDVESNK…RGTNSYCPPQ (112 aa)) are disordered. 13 consecutive transmembrane segments (helical) span residues 122–142 (GAAL…EVLP), 146–166 (LFGL…LEFI), 167–187 (KIPV…GFTI), 206–223 (ALRN…GLGL), 238–258 (LSFG…HFIM), 266–286 (FLLG…NMLM), 311–331 (IVAI…GSVI), 341–361 (VLIG…FPSG), 371–391 (AFLV…IGLH), 419–439 (IVAN…GTEV), 449–469 (IGMC…STFV), 482–502 (VFIA…GPLA), and 523–543 (VAFL…GILG).

It belongs to the monovalent cation:proton antiporter 1 (CPA1) transporter (TC 2.A.36) family. Testis-specific. Expressed in the spermatids and spermatozoa (at protein level). Specifically present in the principal piece of sperm tail (at protein level).

It localises to the cell projection. Its subcellular location is the cilium. The protein resides in the flagellum membrane. Its function is as follows. Sperm-specific Na(+)/H(+) exchanger involved in intracellular pH regulation of spermatozoa. Involved in sperm motility and fertility. This is Sodium/hydrogen exchanger 9B1 from Mus musculus (Mouse).